A 315-amino-acid chain; its full sequence is Protoheme IX farnesyltransferase (315 aa).

The next 9 helical transmembrane spans lie at I38–P58, L62–M82, L111–W131, L132–L152, N159–T179, W184–L204, I233–T253, W255–L275, and L293–F313.

It belongs to the UbiA prenyltransferase family. Protoheme IX farnesyltransferase subfamily.

The protein resides in the cell membrane. It catalyses the reaction heme b + (2E,6E)-farnesyl diphosphate + H2O = Fe(II)-heme o + diphosphate. Its pathway is porphyrin-containing compound metabolism; heme O biosynthesis; heme O from protoheme: step 1/1. Converts heme B (protoheme IX) to heme O by substitution of the vinyl group on carbon 2 of heme B porphyrin ring with a hydroxyethyl farnesyl side group. The chain is Protoheme IX farnesyltransferase from Streptomyces coelicolor (strain ATCC BAA-471 / A3(2) / M145).